We begin with the raw amino-acid sequence, 495 residues long: UDP-N-acetylmuramoyl-L-alanyl-D-glutamate--2,6-diaminopimelate ligase (495 aa).

UDP-N-acetyl-alpha-D-muramoyl-L-alanyl-D-glutamate contacts are provided by residues Leu27, Ser29, and 44–46; that span reads HQA. 116–122 is an ATP binding site; that stretch reads GTNGKTT. Residues Asn157, 158-159, Ser185, Gln191, and Arg193 contribute to the UDP-N-acetyl-alpha-D-muramoyl-L-alanyl-D-glutamate site; that span reads TT. N6-carboxylysine is present on Lys225. Meso-2,6-diaminopimelate-binding positions include Arg390, 414–417, Gly465, and Glu469; that span reads DNPR. Positions 414–417 match the Meso-diaminopimelate recognition motif motif; that stretch reads DNPR.

Belongs to the MurCDEF family. MurE subfamily. Mg(2+) is required as a cofactor. Post-translationally, carboxylation is probably crucial for Mg(2+) binding and, consequently, for the gamma-phosphate positioning of ATP.

It localises to the cytoplasm. The enzyme catalyses UDP-N-acetyl-alpha-D-muramoyl-L-alanyl-D-glutamate + meso-2,6-diaminopimelate + ATP = UDP-N-acetyl-alpha-D-muramoyl-L-alanyl-gamma-D-glutamyl-meso-2,6-diaminopimelate + ADP + phosphate + H(+). It participates in cell wall biogenesis; peptidoglycan biosynthesis. Catalyzes the addition of meso-diaminopimelic acid to the nucleotide precursor UDP-N-acetylmuramoyl-L-alanyl-D-glutamate (UMAG) in the biosynthesis of bacterial cell-wall peptidoglycan. In Enterobacter sp. (strain 638), this protein is UDP-N-acetylmuramoyl-L-alanyl-D-glutamate--2,6-diaminopimelate ligase.